The chain runs to 517 residues: Crotonobetaine/carnitine--CoA ligase (517 aa).

This sequence belongs to the ATP-dependent AMP-binding enzyme family.

It catalyses the reaction 4-(trimethylamino)butanoate + ATP + CoA = 4-(trimethylamino)butanoyl-CoA + AMP + diphosphate. It carries out the reaction crotonobetaine + ATP + CoA = crotonobetainyl-CoA + AMP + diphosphate. The catalysed reaction is (R)-carnitine + ATP + CoA = (R)-carnitinyl-CoA + AMP + diphosphate. It functions in the pathway amine and polyamine metabolism; carnitine metabolism. In terms of biological role, catalyzes the transfer of CoA to carnitine, generating the initial carnitinyl-CoA needed for the CaiB reaction cycle. Also has activity toward crotonobetaine and gamma-butyrobetaine. This is Crotonobetaine/carnitine--CoA ligase from Salmonella paratyphi A (strain ATCC 9150 / SARB42).